The primary structure comprises 1378 residues: Hybrid signal transduction histidine kinase H (1378 aa).

Residues 212–242 (KEKFKKEELINDFKSRLETLENKIDQRVDER) are a coiled coil. Residues 243 to 314 (IETRFKYVLE…NNNNNNNNNN (72 aa)) form the PAS domain. Residues 294 to 337 (YQQHNNNNNNNNNNNNNNNNNNNNNSNNKSPIINSPNTTSPTNT) form a disordered region. A compositionally biased stretch (low complexity) spans 298–337 (NNNNNNNNNNNNNNNNNNNNNSNNKSPIINSPNTTSPTNT). The Histidine kinase domain maps to 498 to 805 (TMSHEMRTPL…SFHFLVEVFF (308 aa)). The residue at position 501 (His501) is a Phosphohistidine; by autocatalysis. Residues 663-696 (NNSNNSNNNHNHNNNNNNNNHLNCSGSFNNNGFN) are compositionally biased toward low complexity. Disordered regions lie at residues 663–717 (NNSN…DKHC), 905–924 (TNNN…STTT), and 1103–1213 (NNSN…HPNP). The span at 697-714 (HGHHHHHHHHHHHHHHHD) shows a compositional bias: basic residues. Composition is skewed to low complexity over residues 1103-1119 (NNSN…SGSS) and 1136-1187 (SPSL…NNNN). Over residues 1188–1206 (LNHYNSDSILSSDLSPQQH) the composition is skewed to polar residues. One can recognise a Response regulatory domain in the interval 1244-1364 (KIMVAEDSLV…ILAVELKRAW (121 aa)). The residue at position 1297 (Asp1297) is a 4-aspartylphosphate.

Post-translationally, activation probably requires transfer of a phosphate group between a histidine in the kinase core (transmitter) domain and an aspartate of the receiver domain.

The enzyme catalyses ATP + protein L-histidine = ADP + protein N-phospho-L-histidine.. In terms of biological role, acts as a receptor histidine kinase for a signal transduction pathway. This protein undergoes an ATP-dependent autophosphorylation at a conserved histidine residue in the kinase core, and a phosphoryl group is then transferred to a conserved aspartate residue in the receiver domain. The chain is Hybrid signal transduction histidine kinase H (dhkH) from Dictyostelium discoideum (Social amoeba).